The primary structure comprises 379 residues: Chaperone protein DnaJ (379 aa).

The 66-residue stretch at 5–70 folds into the J domain; it reads DYYELLEVSR…QKRAAYDQFG (66 aa). Residues 135 to 213 form a CR-type zinc finger; it reads GKEVEITVPR…CHGQGRVRES (79 aa). Positions 148, 151, 165, 168, 187, 190, 201, and 204 each coordinate Zn(2+). 4 CXXCXGXG motif repeats span residues 148 to 155, 165 to 172, 187 to 194, and 201 to 208; these read CTVCEGSG, CETCQGMG, CPTCHGEG, and CASCHGQG.

This sequence belongs to the DnaJ family. As to quaternary structure, homodimer. The cofactor is Zn(2+).

Its subcellular location is the cytoplasm. Participates actively in the response to hyperosmotic and heat shock by preventing the aggregation of stress-denatured proteins and by disaggregating proteins, also in an autonomous, DnaK-independent fashion. Unfolded proteins bind initially to DnaJ; upon interaction with the DnaJ-bound protein, DnaK hydrolyzes its bound ATP, resulting in the formation of a stable complex. GrpE releases ADP from DnaK; ATP binding to DnaK triggers the release of the substrate protein, thus completing the reaction cycle. Several rounds of ATP-dependent interactions between DnaJ, DnaK and GrpE are required for fully efficient folding. Also involved, together with DnaK and GrpE, in the DNA replication of plasmids through activation of initiation proteins. The chain is Chaperone protein DnaJ from Legionella pneumophila (strain Corby).